A 129-amino-acid chain; its full sequence is Natriuretic peptides B (129 aa).

The signal sequence occupies residues 1–26 (MDPQTALSRALLLLLFLHLSLLGCRS). An intrachain disulfide couples C107 to C123.

The protein belongs to the natriuretic peptide family. Post-translationally, the precursor molecule is proteolytically cleaved, possibly by FURIN or CORIN, to produce the active peptide. May undergo further proteolytic cleavage by various proteases such as DPP4, MME and possibly FAP, to give rise to a variety of shorter peptides. May be cleaved at Pro-99 by the prolyl endopeptidase FAP (seprase) activity (in vitro). May be degraded by IDE. During IDE degradation, the resulting products initially increase the activation of NPR1 and can also stimulate NPR2 to produce cGMP before the fragments are completely degraded and inactivated by IDE (in vitro).

The protein localises to the secreted. Cardiac hormone that plays a key role in mediating cardio-renal homeostasis. May also function as a paracrine antifibrotic factor in the heart. Acts by specifically binding and stimulating NPR1 to produce cGMP, which in turn activates effector proteins that drive various biological responses. Involved in regulating the extracellular fluid volume and maintaining the fluid-electrolyte balance through natriuresis, diuresis, vasorelaxation, and inhibition of renin and aldosterone secretion. Binds the clearance receptor NPR3. This is Natriuretic peptides B (NPPB) from Bos taurus (Bovine).